Consider the following 89-residue polypeptide: Small ribosomal subunit protein uS15 (89 aa).

This sequence belongs to the universal ribosomal protein uS15 family. Part of the 30S ribosomal subunit. Forms a bridge to the 50S subunit in the 70S ribosome, contacting the 23S rRNA.

Functionally, one of the primary rRNA binding proteins, it binds directly to 16S rRNA where it helps nucleate assembly of the platform of the 30S subunit by binding and bridging several RNA helices of the 16S rRNA. Forms an intersubunit bridge (bridge B4) with the 23S rRNA of the 50S subunit in the ribosome. This Corynebacterium kroppenstedtii (strain DSM 44385 / JCM 11950 / CIP 105744 / CCUG 35717) protein is Small ribosomal subunit protein uS15.